Reading from the N-terminus, the 1416-residue chain is MDVDFGAQAGQSYRTVQLSAKEVLAAGRRQHYCNMIDLLASSCKSSGLIATSFTDDELVEFWLGDILPLMFDADRKIQDCAVAALAEALVALDVSVIHSAKCWPQIRSEFVDKYTIIIGEMRDAKNSNWHKIWTLLVQIMDEDLLRGCVYINKFLALVELGFRNPDNGVRSEAFLCWRVLIKIFAAYDELTSAKRLRLLLIPLRTSQSRSSHVSGIKLRVWWYLLSCLDHELPKSFDSAVEHFLAFMLGGGPRNLATGLAHNYQTARELALPCLVALWGVESSEPLQRLMRELRLETLVQPSPLMSVEVFQQHWKPLLAAAVSGLKLLTENDATEAEQLLLQLLVRNLCLAMFRLAVAPFNVACCSEIEKILQAEDNSGGRVVRALFNTIAADNLVMERVSGSDHLDVLEAYLKLVLKSKTEVPAAILQRSIACIFAVDRIEANNQNEFRMLGSFAELLMQANDEEDFEGFAFKLQVWRQVSQALSNYLRNNALEYRVAHNASLLDTWLLWPLQTLAAFAGRRASNSFDASFCDQWRQLVNAGQNAPGRKKFLTDLKATLTDLLKSKDEPLFAELFDAYVTSLIKFGLCKEAPLYKDVFGLLQTIFEQPSSQKTLEACLNTLRNLVVELRQNELMVVFDSLKPTLSSGIQCWNKMKCEGGFLEEWKRGIQEKFRKLPMKTMANQLKELFKADDLFVIIPSVWSLNPEKLTDRQKERFAEKSDIPALYNDMSQSQDSASIKPWTPKKVVIAKSKQGELALTGKDDNGEVIDITASEESEKEPVRVDVVTPIRKKPGRKSQAQKELEAAARAASLAEEPPKRQTRTRAAQKETEQVAQPQPAFEPQLRSPKKLPPSPVVQSTAAAVKQAKVAKPTPVVVIAQSEDLFPEVAAEPEPQPEPVKKPDPVPETTQLTPPDVPLEAVPSTQLPGSSGDPAASAGAVAAGEMSPKKSGTRIYNLSSPPDRKQTNNSSSPTLRPKPTGHLTGRGAQLINMIRNKKLDAASGSPYACMSTSRLVHQVTPARAQDRAEQVSTPTSELNELTGTDHTSTPIQAPPSKDLLVFSKRLPSPSASPSVSILKRKLRCESLDDVTLDSPALKRKRVSFHDPPVSVTKEYLRDAEETRSSLKPKRCLLMDKVAQTTEMRQALRRRGRLDSIIEIERFASEQTARTATTDKSLDKSTGEAPEEDAFTSLKWNDTGNAHNISISEEPVKAMEVESELETAGQDLAIMDPEAALDLAVAQLPLESVLQRYFDKSPLKSAGMLAKFLSAQMTANEKLKTNVLETLSENHSKDFLDHAVRENLSSVVCDRLNPTSVLEYVCAKSKISASCRNGLLAQVPEILKSGPRSDSERLAFVQQLMVQCSPGDDLLLDLIDLLMRTRRERNNSTSTHISKGVVSAVGSPDNVAETAADSSSNL.

Disordered stretches follow at residues 789-858, 886-984, 1021-1054, and 1166-1186; these read PIRK…PVVQ, PEVA…HLTG, ARAQ…QAPP, and TART…APEE. The segment covering 928 to 945 has biased composition (low complexity); the sequence is GSSGDPAASAGAVAAGEM. The segment covering 1029-1050 has biased composition (polar residues); the sequence is QVSTPTSELNELTGTDHTSTPI.

Belongs to the RIF1 family. Highly divergent. Interacts with Pp1-87b. Interacts with SuUR (via SNF2-like region). In terms of processing, phosphorylated, probably by Cdk1; phosphorylation regulates dissociation from heterochromatin. Expressed in nurse cells and follicle cells in the adult female (at protein level). Detected in adult at extremely low levels.

It is found in the nucleus. The protein resides in the chromosome. The protein localises to the telomere. Its function is as follows. Regulates the timing of initiation of DNA replication. Functions in copy number control by promoting the underreplication of DNA, which is found in many late replicating euchromatic regions of salivary gland polytene chromosomes. Promotes underreplication by localizing to active DNA replication forks in a partially SuUR-dependent manner, and inhibiting replication fork progression. Might also work as an adapter to recruit Pp1-87B to multiple sites on the chromosome and may function with Pp1-87B to mediate underreplication. Plays an essential role in embryonic development, in the transition from larvae to pupae and, probably, in proliferating tissues later on. In embryos, during mid-blastula transition, binds to and selectively delays the replication of large blocks of repetitive DNA satellite sequences during S phase in response to the activity of Cdk1; maternal Rif1 is specifically required for the normal extension of S phase 14. Unlike mammalian orthologs, does not appear to play a role in DNA damage repair. The polypeptide is Telomere-associated protein RIF1 (Drosophila melanogaster (Fruit fly)).